The primary structure comprises 226 residues: Cytidylate kinase (226 aa).

Position 12 to 20 (12 to 20 (GPSGAGKGT)) interacts with ATP.

This sequence belongs to the cytidylate kinase family. Type 1 subfamily.

It is found in the cytoplasm. The catalysed reaction is CMP + ATP = CDP + ADP. It carries out the reaction dCMP + ATP = dCDP + ADP. The protein is Cytidylate kinase of Vibrio vulnificus (strain YJ016).